The sequence spans 396 residues: Succinyl-diaminopimelate desuccinylase (396 aa).

Residue His-74 coordinates Zn(2+). The active site involves Asp-76. Asp-107 is a Zn(2+) binding site. Glu-142 acts as the Proton acceptor in catalysis. Positions 143, 171, and 360 each coordinate Zn(2+).

This sequence belongs to the peptidase M20A family. DapE subfamily. Homodimer. Zn(2+) serves as cofactor. Requires Co(2+) as cofactor.

The catalysed reaction is N-succinyl-(2S,6S)-2,6-diaminopimelate + H2O = (2S,6S)-2,6-diaminopimelate + succinate. It functions in the pathway amino-acid biosynthesis; L-lysine biosynthesis via DAP pathway; LL-2,6-diaminopimelate from (S)-tetrahydrodipicolinate (succinylase route): step 3/3. Its function is as follows. Catalyzes the hydrolysis of N-succinyl-L,L-diaminopimelic acid (SDAP), forming succinate and LL-2,6-diaminopimelate (DAP), an intermediate involved in the bacterial biosynthesis of lysine and meso-diaminopimelic acid, an essential component of bacterial cell walls. The polypeptide is Succinyl-diaminopimelate desuccinylase (Methylobacterium sp. (strain 4-46)).